The primary structure comprises 297 residues: Phosphatidylserine decarboxylase proenzyme (297 aa).

Catalysis depends on charge relay system; for autoendoproteolytic cleavage activity residues Asp-92, His-149, and Ser-254. Ser-254 functions as the Schiff-base intermediate with substrate; via pyruvic acid; for decarboxylase activity in the catalytic mechanism. Ser-254 carries the pyruvic acid (Ser); by autocatalysis modification.

It belongs to the phosphatidylserine decarboxylase family. PSD-B subfamily. Prokaryotic type I sub-subfamily. Heterodimer of a large membrane-associated beta subunit and a small pyruvoyl-containing alpha subunit. It depends on pyruvate as a cofactor. Post-translationally, is synthesized initially as an inactive proenzyme. Formation of the active enzyme involves a self-maturation process in which the active site pyruvoyl group is generated from an internal serine residue via an autocatalytic post-translational modification. Two non-identical subunits are generated from the proenzyme in this reaction, and the pyruvate is formed at the N-terminus of the alpha chain, which is derived from the carboxyl end of the proenzyme. The autoendoproteolytic cleavage occurs by a canonical serine protease mechanism, in which the side chain hydroxyl group of the serine supplies its oxygen atom to form the C-terminus of the beta chain, while the remainder of the serine residue undergoes an oxidative deamination to produce ammonia and the pyruvoyl prosthetic group on the alpha chain. During this reaction, the Ser that is part of the protease active site of the proenzyme becomes the pyruvoyl prosthetic group, which constitutes an essential element of the active site of the mature decarboxylase.

It localises to the cell membrane. The enzyme catalyses a 1,2-diacyl-sn-glycero-3-phospho-L-serine + H(+) = a 1,2-diacyl-sn-glycero-3-phosphoethanolamine + CO2. It participates in phospholipid metabolism; phosphatidylethanolamine biosynthesis; phosphatidylethanolamine from CDP-diacylglycerol: step 2/2. Catalyzes the formation of phosphatidylethanolamine (PtdEtn) from phosphatidylserine (PtdSer). In Bordetella bronchiseptica (strain ATCC BAA-588 / NCTC 13252 / RB50) (Alcaligenes bronchisepticus), this protein is Phosphatidylserine decarboxylase proenzyme.